A 360-amino-acid polypeptide reads, in one-letter code: Peptide chain release factor 1 (360 aa).

N5-methylglutamine is present on Gln237.

It belongs to the prokaryotic/mitochondrial release factor family. Methylated by PrmC. Methylation increases the termination efficiency of RF1.

It localises to the cytoplasm. Peptide chain release factor 1 directs the termination of translation in response to the peptide chain termination codons UAG and UAA. This chain is Peptide chain release factor 1, found in Ectopseudomonas mendocina (strain ymp) (Pseudomonas mendocina).